Reading from the N-terminus, the 246-residue chain is Uridylate kinase (246 aa).

20-23 (KISG) provides a ligand contact to ATP. The involved in allosteric activation by GTP stretch occupies residues 28 to 33 (GDQGYG). Glycine 62 provides a ligand contact to UMP. Residues glycine 63 and arginine 67 each coordinate ATP. UMP-binding positions include aspartate 82 and 143–150 (TGNPYFTT). Residues threonine 170, tyrosine 176, and aspartate 179 each coordinate ATP.

It belongs to the UMP kinase family. In terms of assembly, homohexamer.

The protein localises to the cytoplasm. The enzyme catalyses UMP + ATP = UDP + ADP. The protein operates within pyrimidine metabolism; CTP biosynthesis via de novo pathway; UDP from UMP (UMPK route): step 1/1. Its activity is regulated as follows. Allosterically activated by GTP. Inhibited by UTP. Catalyzes the reversible phosphorylation of UMP to UDP. In Cereibacter sphaeroides (strain ATCC 17029 / ATH 2.4.9) (Rhodobacter sphaeroides), this protein is Uridylate kinase.